The following is a 349-amino-acid chain: Protein-glutamate methylesterase/protein-glutamine glutaminase (349 aa).

Residues 5–122 enclose the Response regulatory domain; that stretch reads RVLSVDDSAL…REGMLAYSEM (118 aa). Asp56 carries the 4-aspartylphosphate modification. Residues 152–344 form the CheB-type methylesterase domain; it reads LLSSEKLIAI…QQMLAKISAG (193 aa). Active-site residues include Ser164, His190, and Asp286.

The protein belongs to the CheB family. Post-translationally, phosphorylated by CheA. Phosphorylation of the N-terminal regulatory domain activates the methylesterase activity.

It localises to the cytoplasm. It catalyses the reaction [protein]-L-glutamate 5-O-methyl ester + H2O = L-glutamyl-[protein] + methanol + H(+). The catalysed reaction is L-glutaminyl-[protein] + H2O = L-glutamyl-[protein] + NH4(+). Functionally, involved in chemotaxis. Part of a chemotaxis signal transduction system that modulates chemotaxis in response to various stimuli. Catalyzes the demethylation of specific methylglutamate residues introduced into the chemoreceptors (methyl-accepting chemotaxis proteins or MCP) by CheR. Also mediates the irreversible deamidation of specific glutamine residues to glutamic acid. The sequence is that of Protein-glutamate methylesterase/protein-glutamine glutaminase from Salmonella paratyphi A (strain ATCC 9150 / SARB42).